Here is a 438-residue protein sequence, read N- to C-terminus: Probable phosphoglucosamine mutase (438 aa).

Catalysis depends on S91, which acts as the Phosphoserine intermediate. Mg(2+) contacts are provided by S91, D228, D230, and D232. S91 carries the post-translational modification Phosphoserine.

It belongs to the phosphohexose mutase family. Mg(2+) is required as a cofactor. Activated by phosphorylation.

It catalyses the reaction alpha-D-glucosamine 1-phosphate = D-glucosamine 6-phosphate. Its function is as follows. Catalyzes the conversion of glucosamine-6-phosphate to glucosamine-1-phosphate. The polypeptide is Probable phosphoglucosamine mutase (Methanocella arvoryzae (strain DSM 22066 / NBRC 105507 / MRE50)).